The primary structure comprises 159 residues: 2-C-methyl-D-erythritol 2,4-cyclodiphosphate synthase (159 aa).

A divalent metal cation contacts are provided by Asp8 and His10. Residues 8-10 and 34-35 each bind 4-CDP-2-C-methyl-D-erythritol 2-phosphate; these read DVH and HS. His42 contributes to the a divalent metal cation binding site. 4-CDP-2-C-methyl-D-erythritol 2-phosphate contacts are provided by residues 56–58, 132–135, and Arg142; these read DIG and TTTE.

It belongs to the IspF family. Homotrimer. A divalent metal cation is required as a cofactor.

It carries out the reaction 4-CDP-2-C-methyl-D-erythritol 2-phosphate = 2-C-methyl-D-erythritol 2,4-cyclic diphosphate + CMP. Its pathway is isoprenoid biosynthesis; isopentenyl diphosphate biosynthesis via DXP pathway; isopentenyl diphosphate from 1-deoxy-D-xylulose 5-phosphate: step 4/6. In terms of biological role, involved in the biosynthesis of isopentenyl diphosphate (IPP) and dimethylallyl diphosphate (DMAPP), two major building blocks of isoprenoid compounds. Catalyzes the conversion of 4-diphosphocytidyl-2-C-methyl-D-erythritol 2-phosphate (CDP-ME2P) to 2-C-methyl-D-erythritol 2,4-cyclodiphosphate (ME-CPP) with a corresponding release of cytidine 5-monophosphate (CMP). The sequence is that of 2-C-methyl-D-erythritol 2,4-cyclodiphosphate synthase from Chlorobium phaeobacteroides (strain BS1).